We begin with the raw amino-acid sequence, 910 residues long: Triacylglycerol lipase 4 (910 aa).

Over residues serine 51 to lysine 66 the composition is skewed to basic and acidic residues. Positions serine 51–glycine 120 are disordered. The residue at position 55 (serine 55) is a Phosphoserine. The span at threonine 70–threonine 85 shows a compositional bias: polar residues. The span at lysine 90–aspartate 116 shows a compositional bias: acidic residues. A PNPLA domain is found at leucine 282–serine 483. The short motif at glycine 286–glycine 291 is the GXGXXG element. Residues glycine 313–glycine 317 carry the GXSXG motif. Serine 315 serves as the catalytic Nucleophile. Aspartate 470 serves as the catalytic Proton acceptor. 2 disordered regions span residues glutamate 657 to isoleucine 683 and serine 713 to glutamine 777. Residues proline 666 to isoleucine 683 are compositionally biased toward polar residues. Residue threonine 675 is modified to Phosphothreonine; by Cdk1. 4 positions are modified to phosphoserine: serine 737, serine 749, serine 751, and serine 836. Residues threonine 739–isoleucine 768 show a composition bias toward polar residues. Residues arginine 874–glutamine 910 form a disordered region. Low complexity predominate over residues serine 889 to serine 899. Phosphoserine; by Cdk1 is present on serine 890. A compositionally biased stretch (polar residues) spans threonine 900–glutamine 910.

In terms of processing, phosphorylation at Thr-675 and Ser-890 by Cdk1/CDC28 stimulates enzyme activity in vivo.

The protein resides in the lipid droplet. The catalysed reaction is a triacylglycerol + H2O = a diacylglycerol + a fatty acid + H(+). It carries out the reaction 1,2,3-tri-(9Z-octadecenoyl)-glycerol + H2O = di-(9Z)-octadecenoylglycerol + (9Z)-octadecenoate + H(+). It catalyses the reaction 1,2-dihexadecanoyl-sn-glycero-3-phosphocholine + H2O = 1-hexadecanoyl-sn-glycero-3-phosphocholine + hexadecanoate + H(+). The enzyme catalyses cholesteryl (9Z-octadecenoate) + H2O = cholesterol + (9Z)-octadecenoate + H(+). The catalysed reaction is 1-(9Z-octadecenoyl)-sn-glycero-3-phosphate + (9Z)-octadecenoyl-CoA = 1,2-di-(9Z-octadecenoyl)-sn-glycero-3-phosphate + CoA. Phosphorylated and activated by cyclin-dependent kinase 1 (Cdk1/CDC28). Loses its lipolytic activity in cells lacking nonpolar lipids, but retains its side activity as lysophospholipid acyltransferase. Its function is as follows. Lipid particle-localized triacylglycerol (TAG) lipase. The lipid droplet/particle is a lipid storage compartment which serves as a depot of energy and building blocks for membrane lipid biosynthesis. Involved in the mobilization of the non-polar storage lipids triacylglycerols (TAGs) from lipid particles by hydrolysis of TAGs, releasing and supplying specific fatty acids to the appropriate metabolic pathways. Also has steryl ester (SE) hydrolase and phospholipase A(2) (PLA(2)) activities, and catalyzes the acylation of lysophosphatidic acid (LPA). Contributes to early bud formation in late G1 phase of the cell cycle upon phosphorylation and activation by cyclin-dependent kinase 1 (Cdk1/CDC28). The sequence is that of Triacylglycerol lipase 4 (TGL4) from Saccharomyces cerevisiae (strain ATCC 204508 / S288c) (Baker's yeast).